Reading from the N-terminus, the 227-residue chain is Phosphoribosylformylglycinamidine synthase subunit PurQ (227 aa).

In terms of domain architecture, Glutamine amidotransferase type-1 spans 3 to 225; sequence FAVIVFPGSN…LKYWRETYVV (223 aa). Cys-86 (nucleophile) is an active-site residue. Residues His-194 and Glu-196 contribute to the active site.

Part of the FGAM synthase complex composed of 1 PurL, 1 PurQ and 2 PurS subunits.

Its subcellular location is the cytoplasm. It catalyses the reaction N(2)-formyl-N(1)-(5-phospho-beta-D-ribosyl)glycinamide + L-glutamine + ATP + H2O = 2-formamido-N(1)-(5-O-phospho-beta-D-ribosyl)acetamidine + L-glutamate + ADP + phosphate + H(+). The enzyme catalyses L-glutamine + H2O = L-glutamate + NH4(+). The protein operates within purine metabolism; IMP biosynthesis via de novo pathway; 5-amino-1-(5-phospho-D-ribosyl)imidazole from N(2)-formyl-N(1)-(5-phospho-D-ribosyl)glycinamide: step 1/2. In terms of biological role, part of the phosphoribosylformylglycinamidine synthase complex involved in the purines biosynthetic pathway. Catalyzes the ATP-dependent conversion of formylglycinamide ribonucleotide (FGAR) and glutamine to yield formylglycinamidine ribonucleotide (FGAM) and glutamate. The FGAM synthase complex is composed of three subunits. PurQ produces an ammonia molecule by converting glutamine to glutamate. PurL transfers the ammonia molecule to FGAR to form FGAM in an ATP-dependent manner. PurS interacts with PurQ and PurL and is thought to assist in the transfer of the ammonia molecule from PurQ to PurL. This Bacillus cytotoxicus (strain DSM 22905 / CIP 110041 / 391-98 / NVH 391-98) protein is Phosphoribosylformylglycinamidine synthase subunit PurQ.